The chain runs to 462 residues: Glycine--tRNA ligase (462 aa).

Substrate-binding residues include Arg100 and Glu174. ATP contacts are provided by residues Arg206–Glu208, Phe216–Phe221, Glu290–Leu291, and Gly334–Arg337. Residue Phe221–Glu225 coordinates substrate. Glu330 to Gly334 is a binding site for substrate.

Belongs to the class-II aminoacyl-tRNA synthetase family. In terms of assembly, homodimer.

It localises to the cytoplasm. It catalyses the reaction tRNA(Gly) + glycine + ATP = glycyl-tRNA(Gly) + AMP + diphosphate. Its function is as follows. Catalyzes the attachment of glycine to tRNA(Gly). The sequence is that of Glycine--tRNA ligase from Alkaliphilus oremlandii (strain OhILAs) (Clostridium oremlandii (strain OhILAs)).